A 255-amino-acid chain; its full sequence is uncharacterized protein (255 aa).

This is an uncharacterized protein from Paracoccus denitrificans.